A 219-amino-acid polypeptide reads, in one-letter code: Chalcone--flavanone isomerase (219 aa).

The substrate site is built by Thr-50, Asn-115, and Ser-188.

This sequence belongs to the chalcone isomerase family.

It catalyses the reaction a chalcone = a flavanone.. Its pathway is secondary metabolite biosynthesis; flavonoid biosynthesis. Its function is as follows. Catalyzes the intramolecular cyclization of bicyclic chalcones into tricyclic (S)-flavanones. Responsible for the isomerization of 4,2',4',6'-tetrahydroxychalcone (also termed chalcone) into naringenin. This chain is Chalcone--flavanone isomerase (CHI), found in Clitoria ternatea (Butterfly pea).